We begin with the raw amino-acid sequence, 500 residues long: FAD-linked oxidoreductase srdI (500 aa).

The signal sequence occupies residues M1–A20. N-linked (GlcNAc...) asparagine glycosylation occurs at N47. The 173-residue stretch at Y69–S241 folds into the FAD-binding PCMH-type domain. N-linked (GlcNAc...) asparagine glycans are attached at residues N257 and N282.

This sequence belongs to the oxygen-dependent FAD-linked oxidoreductase family. FAD serves as cofactor.

Its function is as follows. FAD-linked oxidoreductase; part of the gene cluster that mediates the biosynthesis of sordarial, a salicylic aldehyde structurally related to the phytotoxin pyriculol. The most interesting aspect of this pathway is formation of an aromatic product from the highly reducing polyketide synthase srdA. SrdA synthesizes a reduced polyketide chain from one molecule of acetyl-CoA and five molecules of malonyl-CoA. The polyketide chain is then reductively released as an aldehyde. The oxidoreductases srdC, srdD and srdE then oxidize one of the hydroxy groups to facilitate the intramolecular aldol condensation, followed by dehydration to yield a salicylic aldehyde. This aldehyde can undergo facile reduction by endogenous reductases to yield the alcohol 1-hydroxy-2-hydroxymethyl-3-pent-1,3-dienylbenzene. The flavin-dependent srdI counteract against the propensity of the aldehydes to be reduced under physiological conditions and is responsible for reoxidizing 1-hydroxy-2-hydroxymethyl-3-pent-1,3-dienylbenzene back to the salicylic aldehyde. This salicylic aldehyde is then selectively epoxidized by the cupin-domain-containing oxidoreductase srdB to yield the epoxide, which can be hydrolyzed stereoselectively by the hydrolase srdG to give the final product sordarial. The protein is FAD-linked oxidoreductase srdI of Neurospora crassa (strain ATCC 24698 / 74-OR23-1A / CBS 708.71 / DSM 1257 / FGSC 987).